The sequence spans 689 residues: uncharacterized protein (689 aa).

4 disordered regions span residues 121–206 (LALK…VDPS), 286–305 (ASSNQSAAHPDGNNALPMDN), 322–414 (NSYS…SMAH), and 552–611 (AAMP…HLSD). Positions 133–158 (SPNNSIPLMANSCLLSADNSSSSTTS) are enriched in low complexity. The segment covering 322–380 (NSYSYDRYTPNQPSYLESKPGNHQPSYTSEQPMYSTASVPQQISNGPTAVNGLPMNSYT) has biased composition (polar residues). 2 stretches are compositionally biased toward low complexity: residues 381 to 411 (PHSNHLHSPSPNSNSGPTDSLSAPNSTSSPS) and 560 to 572 (PSAHDSASAPSPH).

It is found in the cytoplasm. This is an uncharacterized protein from Schizosaccharomyces pombe (strain 972 / ATCC 24843) (Fission yeast).